Reading from the N-terminus, the 154-residue chain is Crossover junction endodeoxyribonuclease RuvC (154 aa).

Residues D7, E67, and D139 contribute to the active site. Mg(2+)-binding residues include D7, E67, and D139.

It belongs to the RuvC family. Homodimer which binds Holliday junction (HJ) DNA. The HJ becomes 2-fold symmetrical on binding to RuvC with unstacked arms; it has a different conformation from HJ DNA in complex with RuvA. In the full resolvosome a probable DNA-RuvA(4)-RuvB(12)-RuvC(2) complex forms which resolves the HJ. It depends on Mg(2+) as a cofactor.

The protein localises to the cytoplasm. It carries out the reaction Endonucleolytic cleavage at a junction such as a reciprocal single-stranded crossover between two homologous DNA duplexes (Holliday junction).. Its function is as follows. The RuvA-RuvB-RuvC complex processes Holliday junction (HJ) DNA during genetic recombination and DNA repair. Endonuclease that resolves HJ intermediates. Cleaves cruciform DNA by making single-stranded nicks across the HJ at symmetrical positions within the homologous arms, yielding a 5'-phosphate and a 3'-hydroxyl group; requires a central core of homology in the junction. The consensus cleavage sequence is 5'-(A/T)TT(C/G)-3'. Cleavage occurs on the 3'-side of the TT dinucleotide at the point of strand exchange. HJ branch migration catalyzed by RuvA-RuvB allows RuvC to scan DNA until it finds its consensus sequence, where it cleaves and resolves the cruciform DNA. This chain is Crossover junction endodeoxyribonuclease RuvC, found in Parasynechococcus marenigrum (strain WH8102).